The sequence spans 216 residues: Probable transaldolase (216 aa).

The Schiff-base intermediate with substrate role is filled by lysine 84.

It belongs to the transaldolase family. Type 3B subfamily.

The protein localises to the cytoplasm. It catalyses the reaction D-sedoheptulose 7-phosphate + D-glyceraldehyde 3-phosphate = D-erythrose 4-phosphate + beta-D-fructose 6-phosphate. It participates in carbohydrate degradation; pentose phosphate pathway; D-glyceraldehyde 3-phosphate and beta-D-fructose 6-phosphate from D-ribose 5-phosphate and D-xylulose 5-phosphate (non-oxidative stage): step 2/3. In terms of biological role, transaldolase is important for the balance of metabolites in the pentose-phosphate pathway. The polypeptide is Probable transaldolase (Lysinibacillus sphaericus (strain C3-41)).